The sequence spans 241 residues: Superantigen-like protein 13 (241 aa).

A signal peptide spans 1–26 (MNNNITKKIILSTTLLLLGTASTQFP).

This sequence belongs to the staphylococcal/streptococcal toxin family. Interacts with host FPR2; this interaction promotes neutrophil chemotaxis.

Functionally, acts as a pathogen alarming molecule by acting on host neutrophil chemotactic factors FPR2. Plays a role of chemoattractant and induces degranulation and oxidative burst in neutrophils. The protein is Superantigen-like protein 13 of Staphylococcus aureus (strain Newman).